Reading from the N-terminus, the 60-residue chain is Protein AC4 (60 aa).

This sequence belongs to the geminiviridae protein AC4/C4 family.

Its function is as follows. Pathogenicity determinant. May act as a suppressor of RNA-mediated gene silencing, also known as post-transcriptional gene silencing (PTGS), a mechanism of plant viral defense that limits the accumulation of viral RNAs. In Pepper huasteco yellow vein virus (PHYVV), this protein is Protein AC4.